The sequence spans 591 residues: tRNA 5-methylaminomethyl-2-thiouridine biosynthesis bifunctional protein MnmC (591 aa).

Positions Met-1 to Pro-232 are tRNA (mnm(5)s(2)U34)-methyltransferase. The FAD-dependent cmnm(5)s(2)U34 oxidoreductase stretch occupies residues Ile-247 to Leu-591.

It in the N-terminal section; belongs to the methyltransferase superfamily. tRNA (mnm(5)s(2)U34)-methyltransferase family. The protein in the C-terminal section; belongs to the DAO family. The cofactor is FAD.

The protein localises to the cytoplasm. The catalysed reaction is 5-aminomethyl-2-thiouridine(34) in tRNA + S-adenosyl-L-methionine = 5-methylaminomethyl-2-thiouridine(34) in tRNA + S-adenosyl-L-homocysteine + H(+). In terms of biological role, catalyzes the last two steps in the biosynthesis of 5-methylaminomethyl-2-thiouridine (mnm(5)s(2)U) at the wobble position (U34) in tRNA. Catalyzes the FAD-dependent demodification of cmnm(5)s(2)U34 to nm(5)s(2)U34, followed by the transfer of a methyl group from S-adenosyl-L-methionine to nm(5)s(2)U34, to form mnm(5)s(2)U34. The protein is tRNA 5-methylaminomethyl-2-thiouridine biosynthesis bifunctional protein MnmC of Caulobacter vibrioides (strain ATCC 19089 / CIP 103742 / CB 15) (Caulobacter crescentus).